Consider the following 200-residue polypeptide: ATP-dependent Clp protease proteolytic subunit 3 (200 aa).

Ser-101 serves as the catalytic Nucleophile. Residue His-126 is part of the active site.

The protein belongs to the peptidase S14 family. Fourteen ClpP subunits assemble into 2 heptameric rings which stack back to back to give a disk-like structure with a central cavity, resembling the structure of eukaryotic proteasomes.

The protein localises to the cytoplasm. It carries out the reaction Hydrolysis of proteins to small peptides in the presence of ATP and magnesium. alpha-casein is the usual test substrate. In the absence of ATP, only oligopeptides shorter than five residues are hydrolyzed (such as succinyl-Leu-Tyr-|-NHMec, and Leu-Tyr-Leu-|-Tyr-Trp, in which cleavage of the -Tyr-|-Leu- and -Tyr-|-Trp bonds also occurs).. Cleaves peptides in various proteins in a process that requires ATP hydrolysis. Has a chymotrypsin-like activity. Plays a major role in the degradation of misfolded proteins. The chain is ATP-dependent Clp protease proteolytic subunit 3 from Synechococcus sp. (strain CC9902).